Here is a 357-residue protein sequence, read N- to C-terminus: Eukaryotic translation initiation factor 3 subunit F (357 aa).

The MPN domain occupies 30-169; sequence VHIQPQAVFS…TKAYISAPVA (140 aa). The segment at 309–357 is disordered; the sequence is VGGDKEGGEKGKDGEDGGRGGRGGKRGGGGRGGHRGEPREPREPREPAE. Basic and acidic residues-rich tracts occupy residues 311–327 and 342–357; these read GDKE…DGGR and HRGE…EPAE.

It belongs to the eIF-3 subunit F family. As to quaternary structure, component of the eukaryotic translation initiation factor 3 (eIF-3) complex.

Its subcellular location is the cytoplasm. Component of the eukaryotic translation initiation factor 3 (eIF-3) complex, which is involved in protein synthesis of a specialized repertoire of mRNAs and, together with other initiation factors, stimulates binding of mRNA and methionyl-tRNAi to the 40S ribosome. The eIF-3 complex specifically targets and initiates translation of a subset of mRNAs involved in cell proliferation. In Chaetomium globosum (strain ATCC 6205 / CBS 148.51 / DSM 1962 / NBRC 6347 / NRRL 1970) (Soil fungus), this protein is Eukaryotic translation initiation factor 3 subunit F.